Consider the following 1007-residue polypeptide: Integrator complex subunit 8 (1007 aa).

The WFEF motif signature appears at 19–24 (WFEFLL). Polar residues predominate over residues 56–78 (TAQESVGTPGSDLQNLNQTPSNS). The disordered stretch occupies residues 56-112 (TAQESVGTPGSDLQNLNQTPSNSGPIPGVVGGAPAPTTPTASGGVGMPHSPQRPAEK). Low complexity predominate over residues 79–97 (GPIPGVVGGAPAPTTPTAS).

The protein belongs to the Integrator subunit 8 family. In terms of assembly, belongs to the multiprotein complex Integrator, at least composed of IntS1, IntS2, IntS3, IntS4, omd/IntS5, IntS6, defl/IntS7, IntS8, IntS9, IntS10, IntS11, IntS12, asun/IntS13, IntS14 and IntS15. The core complex associates with protein phosphatase 2A subunits mts/PP2A and Pp2A-29B, to form the Integrator-PP2A (INTAC) complex.

It localises to the nucleus. The protein resides in the chromosome. In terms of biological role, component of the integrator complex, a multiprotein complex that terminates RNA polymerase II (Pol II) transcription in the promoter-proximal region of genes. The integrator complex provides a quality checkpoint during transcription elongation by driving premature transcription termination of transcripts that are unfavorably configured for transcriptional elongation: the complex terminates transcription by (1) catalyzing dephosphorylation of the C-terminal domain (CTD) of Pol II subunit Polr2A/Rbp1 and Spt5, and (2) degrading the exiting nascent RNA transcript via endonuclease activity. The integrator complex is also involved in the 3'-end processing of the U7 snRNA, and also the spliceosomal snRNAs U1, U2, U4 and U5. Within the integrator complex, INTS8 is required for the recruitment of protein phosphatase 2A (PP2A) to transcription pause-release checkpoint. The polypeptide is Integrator complex subunit 8 (Drosophila melanogaster (Fruit fly)).